Here is a 20-residue protein sequence, read N- to C-terminus: Fibrinogen beta chain (20 aa).

Tyrosine 5 carries the post-translational modification Sulfotyrosine.

In terms of assembly, heterohexamer; disulfide linked. Contains 2 sets of 3 non-identical chains (alpha, beta and gamma). The 2 heterotrimers are in head to head conformation with the N-termini in a small central domain. Post-translationally, conversion of fibrinogen to fibrin is triggered by thrombin, which cleaves fibrinopeptides A and B from alpha and beta chains, and thus exposes the N-terminal polymerization sites responsible for the formation of the soft clot.

It is found in the secreted. In terms of biological role, cleaved by the protease thrombin to yield monomers which, together with fibrinogen alpha (FGA) and fibrinogen gamma (FGG), polymerize to form an insoluble fibrin matrix. Fibrin has a major function in hemostasis as one of the primary components of blood clots. In addition, functions during the early stages of wound repair to stabilize the lesion and guide cell migration during re-epithelialization. Was originally thought to be essential for platelet aggregation, based on in vitro studies using anticoagulated blood. However subsequent studies have shown that it is not absolutely required for thrombus formation in vivo. Enhances expression of SELP in activated platelets. Maternal fibrinogen is essential for successful pregnancy. Fibrin deposition is also associated with infection, where it protects against IFNG-mediated hemorrhage. May also facilitate the antibacterial immune response via both innate and T-cell mediated pathways. This chain is Fibrinogen beta chain (FGB), found in Capra hircus (Goat).